Consider the following 213-residue polypeptide: V-type proton ATPase subunit c'' (213 aa).

Residues methionine 1–lysine 14 are Vacuolar-facing. Residues phenylalanine 15–tyrosine 35 traverse the membrane as a helical segment. Topologically, residues lysine 36–asparagine 61 are cytoplasmic. The helical transmembrane segment at leucine 62–threonine 82 threads the bilayer. Topologically, residues glycine 83 to asparagine 100 are vacuolar. The chain crosses the membrane as a helical span at residues leucine 101 to phenylalanine 121. Topologically, residues serine 122–serine 144 are cytoplasmic. Residues leucine 145–isoleucine 165 form a helical membrane-spanning segment. The Vacuolar portion of the chain corresponds to threonine 166–lysine 183. Residues isoleucine 184–leucine 204 traverse the membrane as a helical segment. At methionine 205–glutamine 213 the chain is on the cytoplasmic side.

It belongs to the V-ATPase proteolipid subunit family. As to quaternary structure, V-ATPase is a heteromultimeric enzyme composed of a peripheral catalytic V1 complex (components A to H) attached to an integral membrane V0 proton pore complex (components: a, c, c', c'', d, e, f and VOA1). The decameric c-ring forms the proton-conducting pore, and is composed of eight proteolipid subunits c, one subunit c' and one subunit c''.

It is found in the vacuole membrane. Proton-conducting pore forming subunit of the V0 complex of vacuolar(H+)-ATPase (V-ATPase), a multisubunit enzyme composed of a peripheral complex (V1) that hydrolyzes ATP and a membrane integral complex (V0) that translocates protons. V-ATPase is responsible for acidifying and maintaining the pH of intracellular compartments. The polypeptide is V-type proton ATPase subunit c'' (VMA16) (Saccharomyces cerevisiae (strain ATCC 204508 / S288c) (Baker's yeast)).